Consider the following 100-residue polypeptide: Small ribosomal subunit protein uS14c (100 aa).

This sequence belongs to the universal ribosomal protein uS14 family. As to quaternary structure, part of the 30S ribosomal subunit.

It localises to the plastid. Its subcellular location is the chloroplast. In terms of biological role, binds 16S rRNA, required for the assembly of 30S particles. The protein is Small ribosomal subunit protein uS14c of Nasturtium officinale (Watercress).